A 465-amino-acid polypeptide reads, in one-letter code: Siroheme synthase (465 aa).

A precorrin-2 dehydrogenase /sirohydrochlorin ferrochelatase region spans residues 1-203; sequence MDFLPLFHSL…GRPAEAERLL (203 aa). Residues 22-23 and 43-44 contribute to the NAD(+) site; these read EV and PQ. Phosphoserine is present on serine 128. The tract at residues 217–465 is uroporphyrinogen-III C-methyltransferase; it reads GEVYLVGAGP…AWFEGAREGA (249 aa). Residue proline 226 coordinates S-adenosyl-L-methionine. The active-site Proton acceptor is aspartate 249. The active-site Proton donor is lysine 271. S-adenosyl-L-methionine-binding positions include 302–304, isoleucine 307, 332–333, methionine 384, and glycine 413; these read GGD and TA.

It in the N-terminal section; belongs to the precorrin-2 dehydrogenase / sirohydrochlorin ferrochelatase family. In the C-terminal section; belongs to the precorrin methyltransferase family.

The catalysed reaction is uroporphyrinogen III + 2 S-adenosyl-L-methionine = precorrin-2 + 2 S-adenosyl-L-homocysteine + H(+). It carries out the reaction precorrin-2 + NAD(+) = sirohydrochlorin + NADH + 2 H(+). It catalyses the reaction siroheme + 2 H(+) = sirohydrochlorin + Fe(2+). The protein operates within cofactor biosynthesis; adenosylcobalamin biosynthesis; precorrin-2 from uroporphyrinogen III: step 1/1. It functions in the pathway cofactor biosynthesis; adenosylcobalamin biosynthesis; sirohydrochlorin from precorrin-2: step 1/1. It participates in porphyrin-containing compound metabolism; siroheme biosynthesis; precorrin-2 from uroporphyrinogen III: step 1/1. Its pathway is porphyrin-containing compound metabolism; siroheme biosynthesis; siroheme from sirohydrochlorin: step 1/1. The protein operates within porphyrin-containing compound metabolism; siroheme biosynthesis; sirohydrochlorin from precorrin-2: step 1/1. Its function is as follows. Multifunctional enzyme that catalyzes the SAM-dependent methylations of uroporphyrinogen III at position C-2 and C-7 to form precorrin-2 via precorrin-1. Then it catalyzes the NAD-dependent ring dehydrogenation of precorrin-2 to yield sirohydrochlorin. Finally, it catalyzes the ferrochelation of sirohydrochlorin to yield siroheme. This is Siroheme synthase from Pseudomonas paraeruginosa (strain DSM 24068 / PA7) (Pseudomonas aeruginosa (strain PA7)).